Consider the following 555-residue polypeptide: Urocanate hydratase (555 aa).

NAD(+) contacts are provided by residues 51 to 52 (GG), Q129, 175 to 177 (GMG), E195, R200, 241 to 242 (NA), 262 to 266 (QTSAH), 272 to 273 (YL), and Y321. Residue C409 is part of the active site. An NAD(+)-binding site is contributed by G491.

It belongs to the urocanase family. The cofactor is NAD(+).

Its subcellular location is the cytoplasm. The catalysed reaction is 4-imidazolone-5-propanoate = trans-urocanate + H2O. It participates in amino-acid degradation; L-histidine degradation into L-glutamate; N-formimidoyl-L-glutamate from L-histidine: step 2/3. In terms of biological role, catalyzes the conversion of urocanate to 4-imidazolone-5-propionate. The chain is Urocanate hydratase from Rhizorhabdus wittichii (strain DSM 6014 / CCUG 31198 / JCM 15750 / NBRC 105917 / EY 4224 / RW1) (Sphingomonas wittichii).